Here is a 585-residue protein sequence, read N- to C-terminus: Arginine--tRNA ligase (585 aa).

Positions 131–141 match the 'HIGH' region motif; sequence ANPTGPMHVGH.

It belongs to the class-I aminoacyl-tRNA synthetase family. Monomer.

It localises to the cytoplasm. It carries out the reaction tRNA(Arg) + L-arginine + ATP = L-arginyl-tRNA(Arg) + AMP + diphosphate. In Brucella canis (strain ATCC 23365 / NCTC 10854 / RM-666), this protein is Arginine--tRNA ligase.